Reading from the N-terminus, the 769-residue chain is Dolichyl-phosphate-mannose--protein mannosyltransferase 2 (769 aa).

Residues 1-44 (MSTSVEPNETEALLRKQNDLSTTASIEEKYPHQQGEAAEDDDDT) form a disordered region. N-linked (GlcNAc...) asparagine glycosylation is present at Asn8. The chain crosses the membrane as a helical span at residues 59-79 (SLKQVESILAPIVFTALSFFV). The N-linked (GlcNAc...) asparagine glycan is linked to Asn132. 3 consecutive transmembrane segments (helical) span residues 152-169 (MRLF…LAYF), 176-194 (FSMF…ESSY), and 200-218 (FILL…VFCF). A glycan (N-linked (GlcNAc...) asparagine) is linked at Asn226. A run of 2 helical transmembrane segments spans residues 252-272 (VKMV…VDLW) and 288-308 (HWFA…MLSF). Asn324 carries an N-linked (GlcNAc...) asparagine glycan. The MIR 1 domain maps to 342 to 397 (PREVSMFHSVITLKNQGLSGGLLHSHVQTFPEGSKQQQVTTYGHKDSNNNWIFQRA). 3 N-linked (GlcNAc...) asparagine glycosylation sites follow: Asn408, Asn453, and Asn462. MIR domains follow at residues 412–468 (IEYI…VEIM) and 474–534 (EDKM…IENN). 4 consecutive transmembrane segments (helical) span residues 615–635 (TTWT…YYLI), 655–675 (FLMG…PFAI), 679–699 (VTYV…FCYE), and 718–738 (LLYL…FWYF).

The protein belongs to the glycosyltransferase 39 family. PMT1 and PMT2 form a functional heterodimer.

The protein localises to the endoplasmic reticulum membrane. It carries out the reaction a di-trans,poly-cis-dolichyl beta-D-mannosyl phosphate + L-seryl-[protein] = 3-O-(alpha-D-mannosyl)-L-seryl-[protein] + a di-trans,poly-cis-dolichyl phosphate + H(+). The catalysed reaction is a di-trans,poly-cis-dolichyl beta-D-mannosyl phosphate + L-threonyl-[protein] = 3-O-(alpha-D-mannosyl)-L-threonyl-[protein] + a di-trans,poly-cis-dolichyl phosphate + H(+). Its pathway is protein modification; protein glycosylation. Protein mannosyltransferase (PMT) involved in hyphal growth and drug sensitivity. Transfers mannose from Dol-P-mannose to Ser or Thr residues on proteins. PMT1, PMT2 and PMT4 account for most of the protein-O-glycosylation activity, while PMT5 and PMT6 may specifically modulate a much narrower spectrum of target proteins. Essential protein that plays an important role in virulence. The protein is Dolichyl-phosphate-mannose--protein mannosyltransferase 2 of Candida albicans (strain SC5314 / ATCC MYA-2876) (Yeast).